The primary structure comprises 596 residues: Fc receptor-like protein 5 (596 aa).

Residues 1-26 (MSGSFSPCVVFTQMWLTLLVVTPVNG) form the signal peptide. Over 27-496 (QHEAAQQSVV…MTKNRSVPMA (470 aa)) the chain is Extracellular. 5 Ig-like C2-type domains span residues 34–115 (SVVS…VEFS), 106–199 (PSMH…NTVV), 207–294 (PRPV…TAFI), 296–384 (PVQR…SFVS), and 398–483 (PVLT…IRIS). 3 disulfides stabilise this stretch: Cys-55/Cys-99, Cys-137/Cys-181, and Cys-228/Cys-277. The N-linked (GlcNAc...) asparagine glycan is linked to Asn-324. 2 cysteine pairs are disulfide-bonded: Cys-325/Cys-373 and Cys-419/Cys-466. Asn-436 carries an N-linked (GlcNAc...) asparagine glycan. The chain crosses the membrane as a helical span at residues 497–517 (AGITVGLLIMAVGVFLFYCWF). Residues 518 to 596 (SRKAGGKPTS…RSRCQMAEKK (79 aa)) lie on the Cytoplasmic side of the membrane. Disordered stretches follow at residues 522–544 (GGKP…PTYY) and 561–596 (EENV…AEKK). Residues 577–596 (KHADQESESPRSRCQMAEKK) are compositionally biased toward basic and acidic residues.

Interacts with CR2. Interacts with CD19. In terms of processing, phosphorylated on cytoplasmic tyrosines; required for interaction with protein tyrosine phosphatases and protein tyrosine kinases. As to expression, preferentially expressed in marginal zone B cells.

The protein localises to the cell membrane. Functionally, plays an important role in B-cell response to antigen that acts both as a negative or positive coreceptor. Inhibits B-cell receptor (BCR) signaling in the absence of CR2 stimulation but engagement with CR2 and the BCR lead to a superior calcium response compared to CR2 and BCR costimulation. May be involved in B-cell development and differentiation in peripheral lymphoid organs and may be useful markers of B-cell stages. May have an immunoregulatory role in marginal zone B-cells. May play a role in fertilization. This is Fc receptor-like protein 5 (Fcrl5) from Mus musculus (Mouse).